The sequence spans 123 residues: Small ribosomal subunit protein uS12 (123 aa).

At Asp89 the chain carries 3-methylthioaspartic acid.

The protein belongs to the universal ribosomal protein uS12 family. As to quaternary structure, part of the 30S ribosomal subunit. Contacts proteins S8 and S17. May interact with IF1 in the 30S initiation complex.

In terms of biological role, with S4 and S5 plays an important role in translational accuracy. Its function is as follows. Interacts with and stabilizes bases of the 16S rRNA that are involved in tRNA selection in the A site and with the mRNA backbone. Located at the interface of the 30S and 50S subunits, it traverses the body of the 30S subunit contacting proteins on the other side and probably holding the rRNA structure together. The combined cluster of proteins S8, S12 and S17 appears to hold together the shoulder and platform of the 30S subunit. This is Small ribosomal subunit protein uS12 from Rhodopseudomonas palustris (strain BisB18).